The sequence spans 238 residues: Ribonuclease PH (238 aa).

Phosphate-binding positions include Arg86 and 124-126 (GTR).

It belongs to the RNase PH family. In terms of assembly, homohexameric ring arranged as a trimer of dimers.

It carries out the reaction tRNA(n+1) + phosphate = tRNA(n) + a ribonucleoside 5'-diphosphate. Functionally, phosphorolytic 3'-5' exoribonuclease that plays an important role in tRNA 3'-end maturation. Removes nucleotide residues following the 3'-CCA terminus of tRNAs; can also add nucleotides to the ends of RNA molecules by using nucleoside diphosphates as substrates, but this may not be physiologically important. Probably plays a role in initiation of 16S rRNA degradation (leading to ribosome degradation) during starvation. This chain is Ribonuclease PH, found in Shigella boydii serotype 18 (strain CDC 3083-94 / BS512).